A 746-amino-acid polypeptide reads, in one-letter code: Quiannulatene synthase (746 aa).

The interval 1–336 (MASEVIVISD…SRYPTKTELN (336 aa)) is sesterterpenoid synthase. Residue aspartate 95 coordinates Mg(2+). The tract at residues 338-746 (PEVIIVDGEL…VELMLRRLWV (409 aa)) is geranylfarnesyl diphosphate synthase. Residues lysine 465, arginine 468, and histidine 497 each coordinate isopentenyl diphosphate. Residues aspartate 504 and aspartate 508 each coordinate Mg(2+). Arginine 513 provides a ligand contact to dimethylallyl diphosphate. Position 514 (arginine 514) interacts with isopentenyl diphosphate. Lysine 591, threonine 592, glutamine 628, asparagine 635, and lysine 645 together coordinate dimethylallyl diphosphate.

This sequence in the N-terminal section; belongs to the terpene synthase family. In the C-terminal section; belongs to the FPP/GGPP synthase family. Mg(2+) is required as a cofactor.

It catalyses the reaction isopentenyl diphosphate + (2E,6E)-farnesyl diphosphate = (2E,6E,10E)-geranylgeranyl diphosphate + diphosphate. It carries out the reaction (2E,6E,10E,14E)-geranylfarnesyl diphosphate = quiannulatene + diphosphate. Its pathway is secondary metabolite biosynthesis; terpenoid biosynthesis. Functionally, bifunctional sesterterpene synthase; part of the gene cluster that mediates the biosynthesis of the pentacyclic sesterterpene quiannulatic acid. The first step of the pathway is performed by the sesterterpene synthase (QS) that possesses both prenyl transferase and terpene cyclase activity, converting isopentenyl diphosphate and dimethylallyl diphosphate into geranylfarnesyl diphosphate (GFPP) and further converting GFPP into quiannulatene via an unprecedented cyclization mode which involves three rounds of hydride shifts and two successive C-C bond migrations to construct the 5-6-5-5-5 fused ring. The cytochrome P450 monooxygenase Qnn-P450 then oxidizes quiannulatene at C-19 in 3 successive reactions to afford quiannulatic acid. This chain is Quiannulatene synthase, found in Emericella variicolor (Aspergillus stellatus).